The chain runs to 423 residues: Mannose-6-phosphate isomerase (423 aa).

Ala2 carries the N-acetylalanine modification. Residues Ser102 and Ser108 each carry the phosphoserine modification. Zn(2+) is bound by residues Gln110, His112, Glu137, and His276. Arg295 is an active-site residue.

The protein belongs to the mannose-6-phosphate isomerase type 1 family. Zn(2+) serves as cofactor. In terms of tissue distribution, expressed in all tissues, but more abundant in testis.

The protein localises to the cytoplasm. It catalyses the reaction D-mannose 6-phosphate = D-fructose 6-phosphate. It functions in the pathway nucleotide-sugar biosynthesis; GDP-alpha-D-mannose biosynthesis; alpha-D-mannose 1-phosphate from D-fructose 6-phosphate: step 1/2. Isomerase that catalyzes the interconversion of fructose-6-P and mannose-6-P and has a critical role in the supply of D-mannose derivatives required for many eukaryotic glycosylation reactions. The sequence is that of Mannose-6-phosphate isomerase from Mus musculus (Mouse).